The following is a 905-amino-acid chain: Stonin-2 (905 aa).

Disordered stretches follow at residues 1-121 (MTTL…HQET), 178-205 (EQTS…VEME), and 244-263 (LPPV…SVIP). Over residues 40–50 (SSSPDQSESSS) the composition is skewed to low complexity. The segment covering 60-73 (SQDHSHSEQDDSSE) has biased composition (basic and acidic residues). Over residues 85-94 (PGSPEQPPPD) the composition is skewed to pro residues. Polar residues predominate over residues 178-196 (EQTSGQASGADSTDNSSSL). Residues 244–256 (LPPVTSPLKPNTP) show a composition bias toward pro residues. Thr255 is subject to Phosphothreonine. Phosphoserine occurs at positions 281, 287, and 302. 2 consecutive short sequence motifs (NPF) follow at residues 313-315 (NPF) and 329-331 (NPF). In terms of domain architecture, SHD spans 427 to 560 (GWPMMLRIPE…DLPVLSMDLS (134 aa)). The MHD domain maps to 568-878 (EEEITVDVRD…SYQVALGSIW (311 aa)). Ser762 bears the Phosphoserine mark.

It belongs to the Stoned B family. Interacts with the second C2 domain of synaptotagmins SYT1 and SYT2. Interacts with EPS15, EPS15R and ITSN1. Interacts indirectly with the AP-2 adapter complex. Interacts with TOR1A and COPS4; the interaction controls STON2 protein stability. Phosphorylated in vitro by PKD. Post-translationally, neddylated; deneddylated via its interaction with the COP9 signalosome (CSN) complex through TOR1A and COPS4. In terms of processing, ubiquitinated; leading to its degradation. Ubiquitous.

It is found in the cytoplasm. It localises to the membrane. The protein resides in the synapse. Its subcellular location is the synaptosome. Its function is as follows. Adapter protein involved in endocytic machinery. Involved in the synaptic vesicle recycling. May facilitate clathrin-coated vesicle uncoating. This Homo sapiens (Human) protein is Stonin-2 (STON2).